The following is a 104-amino-acid chain: Large ribosomal subunit protein uL24 (104 aa).

The protein belongs to the universal ribosomal protein uL24 family. Part of the 50S ribosomal subunit.

One of two assembly initiator proteins, it binds directly to the 5'-end of the 23S rRNA, where it nucleates assembly of the 50S subunit. In terms of biological role, one of the proteins that surrounds the polypeptide exit tunnel on the outside of the subunit. The protein is Large ribosomal subunit protein uL24 of Bartonella bacilliformis (strain ATCC 35685 / KC583 / Herrer 020/F12,63).